The primary structure comprises 213 residues: Phosphoribosyl-dephospho-CoA transferase (213 aa).

Active-site residues include Asp-135 and Asp-137.

It belongs to the MdcG family.

It catalyses the reaction apo-[malonate decarboxylase ACP] + 2'-(5''-triphospho-alpha-D-ribosyl)-3'-dephospho-CoA = holo-[malonate decarboxylase ACP] + diphosphate. Its function is as follows. Transfers 2'-(5-triphosphoribosyl)-3'-dephosphocoenzyme-A to the apo-[acyl-carrier-protein] of the malonate decarboxylase to yield holo-[acyl-carrier-protein]. The chain is Phosphoribosyl-dephospho-CoA transferase from Xanthomonas euvesicatoria pv. vesicatoria (strain 85-10) (Xanthomonas campestris pv. vesicatoria).